The primary structure comprises 816 residues: MGDTVVEPTPLKPTSESTPGPAGSNGGSLLSVITEGVGELSVIDPEVAQKACQEVLEKVKLLHGGVAISSRNSPLELVNGDGVDNEIRCLDDPPSRIREEEDEMGATVAVGTAKGARRQRQNNSAKQSWLLRLFESKLFDISMAMSYLYNSKEPGVQAYIGNRLFCFRNEDVDFYLPQLLNMYIHMDEDVGDAIKPYIVHRCRQSINFSLQCALLLGAYSSDMHISTQRHSRGTKLRKLILSDELKPAHRKRELPSLSPAPDTGLSPSKRTHQRSKSDATASISLSSNLKRTASNPKVENEDEELSSSTESIDNSFSSPVRLAPEREFIKSLMAIGKRLATLPTKEQKTQRLISELSLLNHKLPARVWLPTAGFDHHVVRVPHTQAVVLNSKDKAPYLIYVEVLECENFDTTSVPARIPENRIRSTRSVENLPECGITHEQRAGSFSTVPNYDNDDEAWSVDDIGELQVELPEVHTNSCDNISQFSVDSITSQESKEPVFIAAGDIRRRLSEQLAHTPTAFKRDPEDPSAVALKEPWQEKVRRIREGSPYGHLPNWRLLSVIVKCGDDLRQELLAFQVLKQLQSIWEQERVPLWIKPYKILVISADSGMIEPVVNAVSIHQVKKQSQLSLLDYFLQEHGSYTTEAFLSAQRNFVQSCAGYCLVCYLLQVKDRHNGNILLDAEGHIIHIDFGFILSSSPRNLGFETSAFKLTTEFVDVMGGLDGDMFNYYKMLMLQGLIAARKHMDKVVQIVEIMQQGSQLPCFHGSSTIRNLKERFHMSMTEEQLQLLVEQMVDGSMRSITTKLYDGFQYLTNGIM.

The disordered stretch occupies residues 1 to 30 (MGDTVVEPTPLKPTSESTPGPAGSNGGSLL). An N-acetylglycine modification is found at Gly-2. The interval 2 to 68 (GDTVVEPTPL…VKLLHGGVAI (67 aa)) is interaction with ACBD3. The 191-residue stretch at 52–242 (CQEVLEKVKL…GTKLRKLILS (191 aa)) folds into the PIK helical domain. The interval 248–318 (AHRKRELPSL…TESIDNSFSS (71 aa)) is disordered. Ser-258 is subject to Phosphoserine. Thr-263 is subject to Phosphothreonine. Phosphoserine occurs at positions 266, 275, 277, 284, and 294. 2 stretches are compositionally biased toward polar residues: residues 278-297 (DATA…SNPK) and 306-318 (SSST…SFSS). At Ser-428 the chain carries Phosphoserine. Thr-438 bears the Phosphothreonine mark. The residue at position 511 (Ser-511) is a Phosphoserine. Phosphothreonine occurs at positions 517 and 519. The region spanning 535–801 (EPWQEKVRRI…MVDGSMRSIT (267 aa)) is the PI3K/PI4K catalytic domain. A G-loop region spans residues 541-547 (VRRIREG). A catalytic loop region spans residues 668-676 (QVKDRHNGN). The segment at 687-711 (HIDFGFILSSSPRNLGFETSAFKLT) is activation loop.

The protein belongs to the PI3/PI4-kinase family. Type III PI4K subfamily. In terms of assembly, interacts with ARF1 and ARF3 in the Golgi complex, but not with ARF4, ARF5 or ARF6. Interacts with NCS1/FREQ in a calcium-independent manner. Interacts with CALN1/CABP8 and CALN2/CABP7; in a calcium-dependent manner; this interaction competes with NCS1/FREQ binding. Interacts with ACBD3. Interacts with ARMH3, YWHAB, YWHAE, YWHAG, YWHAH, YWHAQ, YWHAZ and SFN. Interacts with GGA2 (via VHS domain); the interaction is important for PI4KB location at the Golgi apparatus membrane. Interacts with ATG9A. Mg(2+) serves as cofactor. Requires Mn(2+) as cofactor.

The protein resides in the endomembrane system. It is found in the mitochondrion outer membrane. Its subcellular location is the rough endoplasmic reticulum membrane. The protein localises to the golgi apparatus. It localises to the golgi apparatus membrane. It carries out the reaction a 1,2-diacyl-sn-glycero-3-phospho-(1D-myo-inositol) + ATP = a 1,2-diacyl-sn-glycero-3-phospho-(1D-myo-inositol 4-phosphate) + ADP + H(+). With respect to regulation, inhibited by wortmannin. Increased kinase activity upon interaction with NCS1/FREQ. Its function is as follows. Phosphorylates phosphatidylinositol (PI) in the first committed step in the production of the second messenger inositol-1,4,5,-trisphosphate (PIP). May regulate Golgi disintegration/reorganization during mitosis, possibly via its phosphorylation. Involved in Golgi-to-plasma membrane trafficking. May play an important role in the inner ear development. The protein is Phosphatidylinositol 4-kinase beta (PI4KB) of Otolemur garnettii (Small-eared galago).